The following is a 130-amino-acid chain: Mating-type-like protein A1 (130 aa).

The homeobox DNA-binding region spans 68–127 (TYTTRKPLPAKAKLQLVETFSKKRYLTRCEKHQLAVQCGITTNQVQIWFANRRKRSKDLN).

It belongs to the MATA1 family.

It is found in the nucleus. Mating type proteins are sequence specific DNA-binding proteins that act as master switches in yeast differentiation by controlling gene expression in a cell type-specific fashion. This chain is Mating-type-like protein A1 (MTL1A1), found in Candida glabrata (strain ATCC 2001 / BCRC 20586 / JCM 3761 / NBRC 0622 / NRRL Y-65 / CBS 138) (Yeast).